The sequence spans 199 residues: Recombination protein RecR (199 aa).

Residues 57–72 (CSICGNITDKDPCYVC) form a C4-type zinc finger. Residues 80–176 (TIVCVVQDSR…RVTRIAHGLP (97 aa)) form the Toprim domain.

The protein belongs to the RecR family.

Its function is as follows. May play a role in DNA repair. It seems to be involved in an RecBC-independent recombinational process of DNA repair. It may act with RecF and RecO. This chain is Recombination protein RecR, found in Exiguobacterium sibiricum (strain DSM 17290 / CCUG 55495 / CIP 109462 / JCM 13490 / 255-15).